We begin with the raw amino-acid sequence, 266 residues long: Ribosomal RNA small subunit methyltransferase A (266 aa).

His13, Leu15, Gly40, Glu61, Asp85, and Asn104 together coordinate S-adenosyl-L-methionine.

Belongs to the class I-like SAM-binding methyltransferase superfamily. rRNA adenine N(6)-methyltransferase family. RsmA subfamily.

The protein resides in the cytoplasm. The enzyme catalyses adenosine(1518)/adenosine(1519) in 16S rRNA + 4 S-adenosyl-L-methionine = N(6)-dimethyladenosine(1518)/N(6)-dimethyladenosine(1519) in 16S rRNA + 4 S-adenosyl-L-homocysteine + 4 H(+). In terms of biological role, specifically dimethylates two adjacent adenosines (A1518 and A1519) in the loop of a conserved hairpin near the 3'-end of 16S rRNA in the 30S particle. May play a critical role in biogenesis of 30S subunits. The chain is Ribosomal RNA small subunit methyltransferase A from Parabacteroides distasonis (strain ATCC 8503 / DSM 20701 / CIP 104284 / JCM 5825 / NCTC 11152).